The sequence spans 171 residues: Photosystem I assembly protein Ycf3 (171 aa).

TPR repeat units follow at residues 35 to 68, 72 to 105, and 120 to 153; these read AFTY…EIDP, SYIL…NPSL, and GEQA…APNN.

This sequence belongs to the Ycf3 family.

The protein resides in the plastid. It localises to the chloroplast thylakoid membrane. Functionally, essential for the assembly of the photosystem I (PSI) complex. May act as a chaperone-like factor to guide the assembly of the PSI subunits. This is Photosystem I assembly protein Ycf3 from Psilotum nudum (Whisk fern).